Consider the following 120-residue polypeptide: MSGELPPQVQNQLAQLQQLQQQAQALVAQKSQIELLKKEAEAAIKELDKSPDDVVVYKNVGELMLRSDKATLMTELKERVDLLDLRLKTVAKQEERIQSRFNQLQDQLRQSLGQMPPRGG.

This sequence belongs to the prefoldin subunit beta family. In terms of assembly, heterohexamer of two alpha and four beta subunits.

The protein localises to the cytoplasm. Molecular chaperone capable of stabilizing a range of proteins. Seems to fulfill an ATP-independent, HSP70-like function in archaeal de novo protein folding. This is Prefoldin subunit beta from Methanothrix thermoacetophila (strain DSM 6194 / JCM 14653 / NBRC 101360 / PT) (Methanosaeta thermophila).